A 680-amino-acid chain; its full sequence is DNA-directed RNA polymerase subunit beta' (680 aa).

Cysteine 69, cysteine 71, cysteine 87, and cysteine 90 together coordinate Zn(2+). 3 residues coordinate Mg(2+): aspartate 489, aspartate 491, and aspartate 493.

Belongs to the RNA polymerase beta' chain family. RpoC1 subfamily. As to quaternary structure, in plastids the minimal PEP RNA polymerase catalytic core is composed of four subunits: alpha, beta, beta', and beta''. When a (nuclear-encoded) sigma factor is associated with the core the holoenzyme is formed, which can initiate transcription. Mg(2+) serves as cofactor. It depends on Zn(2+) as a cofactor.

The protein resides in the plastid. It is found in the chloroplast. The enzyme catalyses RNA(n) + a ribonucleoside 5'-triphosphate = RNA(n+1) + diphosphate. In terms of biological role, DNA-dependent RNA polymerase catalyzes the transcription of DNA into RNA using the four ribonucleoside triphosphates as substrates. This chain is DNA-directed RNA polymerase subunit beta', found in Olimarabidopsis pumila (Dwarf rocket).